An 83-amino-acid polypeptide reads, in one-letter code: MKALMFLALAGLVLLFVVGYASESEEKEFPIELLSKIFAVDVFKGEERGCKGFGDSCTPGKNECCPNHACSNKHKWCKVYLGK.

Positions 1–21 (MKALMFLALAGLVLLFVVGYA) are cleaved as a signal peptide. Residues 22 to 48 (SESEEKEFPIELLSKIFAVDVFKGEER) constitute a propeptide that is removed on maturation. 3 disulfides stabilise this stretch: cysteine 50–cysteine 65, cysteine 57–cysteine 70, and cysteine 64–cysteine 77. Position 81 is a leucine amide (leucine 81).

The protein belongs to the neurotoxin 10 (Hwtx-1) family. 15 (Hntx-3) subfamily. Monomer. Expressed by the venom gland.

It is found in the secreted. Functionally, lethal neurotoxin. Selectively blocks tetrodotoxin-sensitive voltage-gated sodium channels (Nav). Does not affect tetrodotoxin-resistant voltage-gated sodium channels or calcium channels. The polypeptide is Mu-theraphotoxin-Hhn2j 3 (Cyriopagopus hainanus (Chinese bird spider)).